The chain runs to 511 residues: ADP,ATP carrier protein 4 (511 aa).

12 helical membrane-spanning segments follow: residues 34–54 (VSKF…QNLI), 70–90 (IISF…TAIY), 102–122 (IFYL…YVIF), 157–177 (FSLF…LLFW), 192–212 (FYPL…QFLE), 231–251 (FHTL…IIAI), 296–316 (LIAT…GPWK), 330–350 (AAFI…FVVL), 361–381 (FTAA…FFAV), 390–410 (LIIA…IGAI), 453–473 (LGKS…PSAS), and 476–496 (SIST…LWAT).

The protein belongs to the ADP/ATP translocase tlc family.

The protein localises to the cell membrane. Its function is as follows. Provides the rickettsial cell with host ATP in exchange for rickettsial ADP. This is an obligate exchange system. This energy acquiring activity is an important component of rickettsial parasitism. This Rickettsia conorii (strain ATCC VR-613 / Malish 7) protein is ADP,ATP carrier protein 4 (tlcD).